Consider the following 104-residue polypeptide: MRGGDVFASVVLMLLLALPRPGVSLARRKCCLNPTNRPIPNPLLQDLSRVDYQAIGHDCGREAFRVTLQDGRQGCVSVGNKSLLDWLRGHKDLCPQIWSGCESL.

In terms of assembly, interacts with host CXCL12.

Plays a role in antagonizing the chemotaxis of multiple leukocyte subsets induced by CC and CXC chemokines. Displaces the interaction between CXCL12 and CXCR4 and thereby inactivates the antiviral activity of host CXCL12. The protein is Chemokine-like protein MC148 (MC148) of Homo sapiens (Human).